The primary structure comprises 50 residues: Sperm protamine P1 (50 aa).

Belongs to the protamine P1 family. Cross-linked by interchain disulfide bonds around the DNA-helix. Testis.

The protein resides in the nucleus. Its subcellular location is the chromosome. Its function is as follows. Protamines substitute for histones in the chromatin of sperm during the haploid phase of spermatogenesis. They compact sperm DNA into a highly condensed, stable and inactive complex. This Saimiri sciureus (Common squirrel monkey) protein is Sperm protamine P1 (PRM1).